The primary structure comprises 45 residues: DNA-directed RNA polymerase subunit Rpo12 (45 aa).

Residues Cys-8, Cys-23, and Cys-26 each coordinate Zn(2+).

This sequence belongs to the archaeal Rpo12/eukaryotic RPC10 RNA polymerase subunit family. In terms of assembly, part of the RNA polymerase complex. Zn(2+) is required as a cofactor.

It is found in the cytoplasm. The catalysed reaction is RNA(n) + a ribonucleoside 5'-triphosphate = RNA(n+1) + diphosphate. DNA-dependent RNA polymerase (RNAP) catalyzes the transcription of DNA into RNA using the four ribonucleoside triphosphates as substrates. This chain is DNA-directed RNA polymerase subunit Rpo12, found in Methanothrix thermoacetophila (strain DSM 6194 / JCM 14653 / NBRC 101360 / PT) (Methanosaeta thermophila).